Here is a 442-residue protein sequence, read N- to C-terminus: D-serine dehydratase (442 aa).

Lys118 carries the N6-(pyridoxal phosphate)lysine modification.

It belongs to the serine/threonine dehydratase family. DsdA subfamily. In terms of assembly, monomer. Pyridoxal 5'-phosphate is required as a cofactor.

It catalyses the reaction D-serine = pyruvate + NH4(+). In Escherichia coli O157:H7, this protein is D-serine dehydratase.